The sequence spans 278 residues: Release factor glutamine methyltransferase (278 aa).

Residues 116–120 (GTGTG), Asp139, Trp168, and Asn182 contribute to the S-adenosyl-L-methionine site. 182-185 (NPPY) is a substrate binding site.

The protein belongs to the protein N5-glutamine methyltransferase family. PrmC subfamily.

The catalysed reaction is L-glutaminyl-[peptide chain release factor] + S-adenosyl-L-methionine = N(5)-methyl-L-glutaminyl-[peptide chain release factor] + S-adenosyl-L-homocysteine + H(+). Methylates the class 1 translation termination release factors RF1/PrfA and RF2/PrfB on the glutamine residue of the universally conserved GGQ motif. This chain is Release factor glutamine methyltransferase, found in Cereibacter sphaeroides (strain ATCC 17023 / DSM 158 / JCM 6121 / CCUG 31486 / LMG 2827 / NBRC 12203 / NCIMB 8253 / ATH 2.4.1.) (Rhodobacter sphaeroides).